The primary structure comprises 513 residues: Cytochrome P450 1A2 (513 aa).

Serine 68 carries O-linked (GlcNAc) serine glycosylation. Phenylalanine 225 contacts substrate. Cysteine 456 serves as a coordination point for heme.

It belongs to the cytochrome P450 family. As to quaternary structure, interacts with PGRMC1; the interaction requires PGRMC1 homodimerization. Heme is required as a cofactor.

It localises to the endoplasmic reticulum membrane. The protein localises to the microsome membrane. It carries out the reaction an organic molecule + reduced [NADPH--hemoprotein reductase] + O2 = an alcohol + oxidized [NADPH--hemoprotein reductase] + H2O + H(+). The catalysed reaction is 17beta-estradiol + reduced [NADPH--hemoprotein reductase] + O2 = 2-hydroxy-17beta-estradiol + oxidized [NADPH--hemoprotein reductase] + H2O + H(+). It catalyses the reaction 17beta-estradiol + reduced [NADPH--hemoprotein reductase] + O2 = 4-hydroxy-17beta-estradiol + oxidized [NADPH--hemoprotein reductase] + H2O + H(+). The enzyme catalyses estrone + reduced [NADPH--hemoprotein reductase] + O2 = 2-hydroxyestrone + oxidized [NADPH--hemoprotein reductase] + H2O + H(+). It carries out the reaction estrone + reduced [NADPH--hemoprotein reductase] + O2 = 4-hydroxyestrone + oxidized [NADPH--hemoprotein reductase] + H2O + H(+). The catalysed reaction is cholesterol + reduced [NADPH--hemoprotein reductase] + O2 = 25-hydroxycholesterol + oxidized [NADPH--hemoprotein reductase] + H2O + H(+). It catalyses the reaction all-trans-retinol + reduced [NADPH--hemoprotein reductase] + O2 = all-trans-retinal + oxidized [NADPH--hemoprotein reductase] + 2 H2O + H(+). The enzyme catalyses all-trans-retinal + reduced [NADPH--hemoprotein reductase] + O2 = all-trans-retinoate + oxidized [NADPH--hemoprotein reductase] + H2O + 2 H(+). It carries out the reaction (5Z,8Z,11Z,14Z)-eicosatetraenoate + reduced [NADPH--hemoprotein reductase] + O2 = (14R,15S)-epoxy-(5Z,8Z,11Z)-eicosatrienoate + oxidized [NADPH--hemoprotein reductase] + H2O + H(+). The catalysed reaction is (5Z,8Z,11Z,14Z)-eicosatetraenoate + reduced [NADPH--hemoprotein reductase] + O2 = (14S,15R)-epoxy-(5Z,8Z,11Z)-eicosatrienoate + oxidized [NADPH--hemoprotein reductase] + H2O + H(+). It catalyses the reaction (5Z,8Z,11Z,14Z,17Z)-eicosapentaenoate + reduced [NADPH--hemoprotein reductase] + O2 = (17R,18S)-epoxy-(5Z,8Z,11Z,14Z)-eicosatetraenoate + oxidized [NADPH--hemoprotein reductase] + H2O + H(+). The enzyme catalyses (4Z,7Z,10Z,13Z,16Z,19Z)-docosahexaenoate + reduced [NADPH--hemoprotein reductase] + O2 = (19R,20S)-epoxy-(4Z,7Z,10Z,13Z,16Z)-docosapentaenoate + oxidized [NADPH--hemoprotein reductase] + H2O + H(+). It carries out the reaction (5S)-hydroperoxy-(6E,8Z,11Z,14Z)-eicosatetraenoate = 5-oxo-(6E,8Z,11Z,14Z)-eicosatetraenoate + H2O. The catalysed reaction is (12S)-hydroperoxy-(5Z,8Z,10E,14Z)-eicosatetraenoate = 12-oxo-(5Z,8Z,10E,14Z)-eicosatetraenoate + H2O. It catalyses the reaction (15S)-hydroperoxy-(5Z,8Z,11Z,13E)-eicosatetraenoate = 15-oxo-(5Z,8Z,11Z,13E)-eicosatetraenoate + H2O. The enzyme catalyses (13S)-hydroperoxy-(9Z,11E)-octadecadienoate = 13-oxo-(9Z,11E)-octadecadienoate + H2O. It carries out the reaction (5Z,8Z,11Z,14Z)-eicosatetraenoate + reduced [NADPH--hemoprotein reductase] + O2 = 13-hydroxy-(5Z,8Z,11Z,14Z)-eicosatetraenoate + oxidized [NADPH--hemoprotein reductase] + H2O + H(+). The catalysed reaction is (5Z,8Z,11Z,14Z)-eicosatetraenoate + reduced [NADPH--hemoprotein reductase] + O2 = 19-hydroxy-(5Z,8Z,11Z,14Z)-eicosatetraenoate + oxidized [NADPH--hemoprotein reductase] + H2O + H(+). It catalyses the reaction (9Z,12Z)-octadecadienoate + reduced [NADPH--hemoprotein reductase] + O2 = 11-hydroxy-(9Z,12Z)-octadecadienoate + oxidized [NADPH--hemoprotein reductase] + H2O + H(+). It functions in the pathway cofactor metabolism; retinol metabolism. Its pathway is steroid metabolism; cholesterol metabolism. It participates in lipid metabolism; arachidonate metabolism. A cytochrome P450 monooxygenase involved in the metabolism of various endogenous substrates, including fatty acids, steroid hormones and vitamins. Mechanistically, uses molecular oxygen inserting one oxygen atom into a substrate, and reducing the second into a water molecule, with two electrons provided by NADPH via cytochrome P450 reductase (NADPH--hemoprotein reductase). Catalyzes the hydroxylation of carbon-hydrogen bonds. Exhibits high catalytic activity for the formation of hydroxyestrogens from estrone (E1) and 17beta-estradiol (E2), namely 2-hydroxy E1 and E2. Metabolizes cholesterol toward 25-hydroxycholesterol, a physiological regulator of cellular cholesterol homeostasis. May act as a major enzyme for all-trans retinoic acid biosynthesis in the liver. Catalyzes two successive oxidative transformation of all-trans retinol to all-trans retinal and then to the active form all-trans retinoic acid. Primarily catalyzes stereoselective epoxidation of the last double bond of polyunsaturated fatty acids (PUFA), displaying a strong preference for the (R,S) stereoisomer. Catalyzes bisallylic hydroxylation and omega-1 hydroxylation of PUFA. May also participate in eicosanoids metabolism by converting hydroperoxide species into oxo metabolites (lipoxygenase-like reaction, NADPH-independent). Plays a role in the oxidative metabolism of xenobiotics. Catalyzes the N-hydroxylation of heterocyclic amines and the O-deethylation of phenacetin. Metabolizes caffeine via N3-demethylation. In Mus musculus (Mouse), this protein is Cytochrome P450 1A2 (Cyp1a2).